A 121-amino-acid polypeptide reads, in one-letter code: Succinate dehydrogenase assembly factor 3, mitochondrial (121 aa).

A mitochondrion-targeting transit peptide spans 1-35 (MRPSLVRLVRPRRPERKTSPILPPLKLYKALLRAH).

Belongs to the complex I LYR family. SDHAF3 subfamily. Interacts with the iron-sulfur protein subunit within the SDH catalytic dimer.

The protein localises to the mitochondrion matrix. Plays an essential role in the assembly of succinate dehydrogenase (SDH), an enzyme complex (also referred to as respiratory complex II) that is a component of both the tricarboxylic acid (TCA) cycle and the mitochondrial electron transport chain, and which couples the oxidation of succinate to fumarate with the reduction of ubiquinone (coenzyme Q) to ubiquinol. Promotes maturation of the iron-sulfur protein subunit of the SDH catalytic dimer, protecting it from the deleterious effects of oxidants. May act together with SDHAF1. This chain is Succinate dehydrogenase assembly factor 3, mitochondrial, found in Debaryomyces hansenii (strain ATCC 36239 / CBS 767 / BCRC 21394 / JCM 1990 / NBRC 0083 / IGC 2968) (Yeast).